The primary structure comprises 261 residues: Hydroxylase cctR (261 aa).

The chain crosses the membrane as a helical span at residues 38–58; the sequence is VFVSLLILSNTISFGLLGWIG. Asparagine 95 carries N-linked (GlcNAc...) asparagine glycosylation. 2 short sequence motifs (HXXHC) span residues 146-150 and 176-180; these read HEIHC and HIAHC.

The protein belongs to the ustYa family.

The protein localises to the membrane. The protein operates within mycotoxin biosynthesis. Hydroxylase; part of the gene cluster that mediates the biosynthesis of the mycotoxin cyclochlorotine, a hepatotoxic and carcinogenic cyclic chlorinated pentapeptide. Within the pathway, cctR performs the last step by hydroxylating cyclochlorotine to yield hydroxycyclochlorotine. The NRPS cctN initially catalyzes the condensation of L-serine (Ser), Pro, L-2-aminobutyrate (2Abu), Ser, and beta-Phe in this order to produce isocyclotine. After the dichlorination of Pro2 catalyzed by cctP2 to produce isocyclochlorotine, the cctO-mediated transacylation of isocyclochlorotine can furnish cyclochlorotine. The subsequent hydroxylation of cyclochlorotine by cctR yields hydroxycyclochlorotine as the final product. CctP1 probably acts as a phenylalanine aminomutase and provides the uncommon building block beta-Phe. Furthermore, 2Abu can be synthesized from threonine by one of the threonine dehydratases and transaminases localized outside of the cluster. The functions of the remaining proteins encoded by the cluster, cctM and cctT, have not been identified yet. The chain is Hydroxylase cctR from Talaromyces islandicus (Penicillium islandicum).